We begin with the raw amino-acid sequence, 555 residues long: MKSDIEIARSVELKKIKQVAESIGIPRDEVENYGRYIAKIPEYLIDEEKVKKSNLILVTAITATKAGIGKTTVSIGLALGLNKIGKKAIVALREPSLGPCFGMKGGAAGGGYAQVLPMEKINLHFTGDFHAITSAHNMISALLDNYLYQNQSKGFGLKEILWRRVLDVNDRSLRNIVVGLGPKTNGITQESGFDITPASEIMAILCLSKDVDDLRRRIENILLGYTYDNKPFTVKDLGVAGAITVLLKDAIHPNLVQTTEGTAAFVHGGPFANIAHGCNSILATKMAMTFGDYVITEAGFGADLGAEKFYNIKCRKSGLQPRLTVIVATAQGLKMHGGVSLDRIKEPNLEGLREGLRNLDKHVRNLHSFGQTVIVAFNKFASDTDEEMELLREHCEQLGVGYAINNAFSEGGEGAVDLANLVVETIENKPSEPLQFTYNDEDSVQQKIEKVATNLYGASVVTYSTLTRNKIKLIEEMGIGHYPVCIAKTQYSFSADPKVYGAVDNFELHIKDIVINNGAEMIVAIAGEIMRMPGLPKEPQALHIDIVDGNIEGLS.

64–71 is an ATP binding site; the sequence is TKAGIGKT.

Belongs to the formate--tetrahydrofolate ligase family.

The enzyme catalyses (6S)-5,6,7,8-tetrahydrofolate + formate + ATP = (6R)-10-formyltetrahydrofolate + ADP + phosphate. Its pathway is one-carbon metabolism; tetrahydrofolate interconversion. This chain is Formate--tetrahydrofolate ligase, found in Bacteroides fragilis (strain ATCC 25285 / DSM 2151 / CCUG 4856 / JCM 11019 / LMG 10263 / NCTC 9343 / Onslow / VPI 2553 / EN-2).